Reading from the N-terminus, the 101-residue chain is Urease subunit beta (101 aa).

It belongs to the urease beta subunit family. As to quaternary structure, heterotrimer of UreA (gamma), UreB (beta) and UreC (alpha) subunits. Three heterotrimers associate to form the active enzyme.

The protein resides in the cytoplasm. It carries out the reaction urea + 2 H2O + H(+) = hydrogencarbonate + 2 NH4(+). The protein operates within nitrogen metabolism; urea degradation; CO(2) and NH(3) from urea (urease route): step 1/1. The chain is Urease subunit beta from Paraburkholderia xenovorans (strain LB400).